Consider the following 184-residue polypeptide: ATP synthase subunit b, chloroplastic (184 aa).

The helical transmembrane segment at 27–49 threads the bilayer; it reads LATNPINLSVVLGVLIFFGKGVL.

Belongs to the ATPase B chain family. F-type ATPases have 2 components, F(1) - the catalytic core - and F(0) - the membrane proton channel. F(1) has five subunits: alpha(3), beta(3), gamma(1), delta(1), epsilon(1). F(0) has four main subunits: a(1), b(1), b'(1) and c(10-14). The alpha and beta chains form an alternating ring which encloses part of the gamma chain. F(1) is attached to F(0) by a central stalk formed by the gamma and epsilon chains, while a peripheral stalk is formed by the delta, b and b' chains.

The protein localises to the plastid. The protein resides in the chloroplast thylakoid membrane. Functionally, f(1)F(0) ATP synthase produces ATP from ADP in the presence of a proton or sodium gradient. F-type ATPases consist of two structural domains, F(1) containing the extramembraneous catalytic core and F(0) containing the membrane proton channel, linked together by a central stalk and a peripheral stalk. During catalysis, ATP synthesis in the catalytic domain of F(1) is coupled via a rotary mechanism of the central stalk subunits to proton translocation. Component of the F(0) channel, it forms part of the peripheral stalk, linking F(1) to F(0). In Buxus microphylla (Littleleaf boxwood), this protein is ATP synthase subunit b, chloroplastic.